The chain runs to 321 residues: Lipoyl synthase (321 aa).

Residues cysteine 68, cysteine 73, cysteine 79, cysteine 94, cysteine 98, cysteine 101, and serine 308 each coordinate [4Fe-4S] cluster. Residues phenylalanine 80–threonine 297 form the Radical SAM core domain.

The protein belongs to the radical SAM superfamily. Lipoyl synthase family. [4Fe-4S] cluster serves as cofactor.

It is found in the cytoplasm. It carries out the reaction [[Fe-S] cluster scaffold protein carrying a second [4Fe-4S](2+) cluster] + N(6)-octanoyl-L-lysyl-[protein] + 2 oxidized [2Fe-2S]-[ferredoxin] + 2 S-adenosyl-L-methionine + 4 H(+) = [[Fe-S] cluster scaffold protein] + N(6)-[(R)-dihydrolipoyl]-L-lysyl-[protein] + 4 Fe(3+) + 2 hydrogen sulfide + 2 5'-deoxyadenosine + 2 L-methionine + 2 reduced [2Fe-2S]-[ferredoxin]. It participates in protein modification; protein lipoylation via endogenous pathway; protein N(6)-(lipoyl)lysine from octanoyl-[acyl-carrier-protein]: step 2/2. Functionally, catalyzes the radical-mediated insertion of two sulfur atoms into the C-6 and C-8 positions of the octanoyl moiety bound to the lipoyl domains of lipoate-dependent enzymes, thereby converting the octanoylated domains into lipoylated derivatives. The chain is Lipoyl synthase from Escherichia coli O9:H4 (strain HS).